The following is a 969-amino-acid chain: RNA polymerase-associated protein RapA (969 aa).

The Helicase ATP-binding domain occupies 162–339; that stretch reads EVGQRVAPRV…FARLALLDAD (178 aa). Residue 175–182 coordinates ATP; sequence DEVGLGKT. Positions 285–288 match the DEAH box motif; sequence DEAH. The Helicase C-terminal domain occupies 492–663; it reads RIEWLITFLK…GFLKNPQAVG (172 aa).

Belongs to the SNF2/RAD54 helicase family. RapA subfamily. Interacts with the RNAP. Has a higher affinity for the core RNAP than for the holoenzyme. Its ATPase activity is stimulated by binding to RNAP.

In terms of biological role, transcription regulator that activates transcription by stimulating RNA polymerase (RNAP) recycling in case of stress conditions such as supercoiled DNA or high salt concentrations. Probably acts by releasing the RNAP, when it is trapped or immobilized on tightly supercoiled DNA. Does not activate transcription on linear DNA. Probably not involved in DNA repair. The sequence is that of RNA polymerase-associated protein RapA from Actinobacillus pleuropneumoniae serotype 5b (strain L20).